The sequence spans 509 residues: Probable aspartic-type endopeptidase CTSD (509 aa).

Residues 1-21 (MQFLWLCLLSAVTLQFTGTLA) form the signal peptide. Residues 102-408 (YFSEVKVGSE…DFDKNRVGLA (307 aa)) form the Peptidase A1 domain. Residue Asp120 is part of the active site. Asn174 carries an N-linked (GlcNAc...) asparagine glycan. Asp302 is a catalytic residue. Asn361 is a glycosylation site (N-linked (GlcNAc...) asparagine). A disordered region spans residues 451–489 (NKAPSGGSPGLPAESGSDSTTNGEATNGATSSPNSSSSV). The segment covering 466-480 (GSDSTTNGEATNGAT) has biased composition (polar residues). The N-linked (GlcNAc...) asparagine glycan is linked to Asn484. Ser485 carries GPI-anchor amidated serine lipidation. The propeptide at 486–509 (SSSVLTPTWLTLAVFFAIGSSLWS) is removed in mature form.

Belongs to the peptidase A1 family.

It localises to the cell membrane. Its function is as follows. Probable GPI-anchored aspartic-type endopeptidase which contributes to virulence. The sequence is that of Probable aspartic-type endopeptidase CTSD (CTSD) from Trichophyton verrucosum (strain HKI 0517).